The primary structure comprises 587 residues: Putative gustatory receptor 59b (587 aa).

Residues 1–4 (MPSY) lie on the Cytoplasmic side of the membrane. Residues 5-25 (MAFTPYIMFSTNYAAIAYILI) form a helical membrane-spanning segment. The Extracellular portion of the chain corresponds to 26 to 62 (SRCYRDSMLLDLQRITLEVNREMLRTGKKMNSLIRRM). The helical transmembrane segment at 63–83 (FFLKTFTLTYSCLSYILAVLV) threads the bilayer. Residues 84-97 (YQWRAQNWSNLFNG) are Cytoplasmic-facing. The helical transmembrane segment at 98–118 (LLVNISLTILVVTTFFYFVSL) threads the bilayer. Over 119–277 (MHVARGFDFV…CGLYPVNKAK (159 aa)) the chain is Extracellular. Residue Asn159 is glycosylated (N-linked (GlcNAc...) asparagine). The helical transmembrane segment at 278–298 (WLEMVASIVVHSIMLFQFHLV) threads the bilayer. The Cytoplasmic segment spans residues 299 to 309 (MRGGYTTLFSR). Residues 310-330 (TYALLANIITLTMLPIVMWQV) form a helical membrane-spanning segment. Residues 331–403 (RSVFLAKRHY…GIDGVRRSLR (73 aa)) lie on the Extracellular side of the membrane. A helical transmembrane segment spans residues 404-424 (ILLFVKFFTLSWLCITDIIFL). The Cytoplasmic portion of the chain corresponds to 425 to 518 (FYSSDAVIWV…IYAPQMLATR (94 aa)). The helical transmembrane segment at 519-539 (FDHFVIGVIQAYWGAVFTFDL) threads the bilayer. Residues 540–587 (STSFLWVVYGSVQYHVRSLDYYLIDYMCDVAVEYHDSARHSWSEKECY) are Extracellular-facing.

This sequence belongs to the insect chemoreceptor superfamily. Gustatory receptor (GR) family. Gr22e subfamily.

The protein resides in the cell membrane. In terms of biological role, probable gustatory receptor which mediates acceptance or avoidance behavior, depending on its substrates. In Drosophila erecta (Fruit fly), this protein is Putative gustatory receptor 59b.